Consider the following 353-residue polypeptide: 4-hydroxy-3-methylbut-2-en-1-yl diphosphate synthase (flavodoxin) (353 aa).

[4Fe-4S] cluster contacts are provided by Cys-263, Cys-266, Cys-298, and Glu-305.

Belongs to the IspG family. [4Fe-4S] cluster serves as cofactor.

The enzyme catalyses (2E)-4-hydroxy-3-methylbut-2-enyl diphosphate + oxidized [flavodoxin] + H2O + 2 H(+) = 2-C-methyl-D-erythritol 2,4-cyclic diphosphate + reduced [flavodoxin]. The protein operates within isoprenoid biosynthesis; isopentenyl diphosphate biosynthesis via DXP pathway; isopentenyl diphosphate from 1-deoxy-D-xylulose 5-phosphate: step 5/6. Converts 2C-methyl-D-erythritol 2,4-cyclodiphosphate (ME-2,4cPP) into 1-hydroxy-2-methyl-2-(E)-butenyl 4-diphosphate. The protein is 4-hydroxy-3-methylbut-2-en-1-yl diphosphate synthase (flavodoxin) of Geobacter sulfurreducens (strain ATCC 51573 / DSM 12127 / PCA).